Consider the following 490-residue polypeptide: GTPase Der (490 aa).

EngA-type G domains are found at residues Pro3–Val166 and Ile203–Thr376. Residues Gly9 to Ser16, Asp56 to Ile60, Asn118 to Asp121, Gly209 to Ser216, Asp256 to Val260, and Asn321 to Asp324 contribute to the GTP site. A KH-like domain is found at Arg377 to Glu461.

The protein belongs to the TRAFAC class TrmE-Era-EngA-EngB-Septin-like GTPase superfamily. EngA (Der) GTPase family. In terms of assembly, associates with the 50S ribosomal subunit.

Functionally, GTPase that plays an essential role in the late steps of ribosome biogenesis. In Salmonella gallinarum (strain 287/91 / NCTC 13346), this protein is GTPase Der.